Reading from the N-terminus, the 798-residue chain is Cadherin-20 (798 aa).

Residues 1-35 form the signal peptide; it reads MWTSGRMSNAKNLFGLGVSLYFWGLMDLTTTVLSG. A propeptide spanning residues 36–58 is cleaved from the precursor; it reads SARPLTEGPEDNLSDKLHQRMKR. Asn47 is a glycosylation site (N-linked (GlcNAc...) asparagine). At 59–618 the chain is on the extracellular side; it reads SWVWNQFFVL…AYVLPVSLSR (560 aa). Cadherin domains follow at residues 60–164, 165–273, 274–392, 389–493, and 493–615; these read WVWN…EPKF, LDGP…PPRF, PQKH…EPSF, EPSF…APEF, and FARF…LPVS. A Cell attachment site motif is present at residues 88–90; it reads RGD. A glycan (N-linked (GlcNAc...) asparagine) is linked at Asn260. Asn419, Asn460, and Asn541 each carry an N-linked (GlcNAc...) asparagine glycan. A helical transmembrane segment spans residues 619 to 639; that stretch reads GALIAILACIFVLLVLVLLIL. Residues 640-798 lie on the Cytoplasmic side of the membrane; that stretch reads SMRRQRKQPY…GATDSSGALW (159 aa).

Detected in embryonic spinal cord, in the brachial and lumbar section of motor neurons (at protein level). Detected in ventro-lateral portion of embryonic spinal cord, in the brachial and lumbar section of embryonic motor neurons. Detected in embryonic adductor motor neurons and embryonic dorsal root ganglion. Detected in the caudal half of newly generated somites and in presomitic mesoderm.

The protein resides in the cell membrane. Functionally, cadherins are calcium-dependent cell adhesion proteins. They preferentially interact with themselves in a homophilic manner in connecting cells; cadherins may thus contribute to the sorting of heterogeneous cell types. This is Cadherin-20 (CDH20) from Gallus gallus (Chicken).